A 254-amino-acid polypeptide reads, in one-letter code: Axonemal dynein light intermediate polypeptide 1 (254 aa).

The disordered stretch occupies residues 1–55 (MIPPADSLLKHDNPVLISKNTERKSPKSRPLKVSSPQTVLTAPVPPPPKPKTPLL). A coiled-coil region spans residues 175–245 (ALQAEQGKSD…KRTNQQLKAQ (71 aa)).

This sequence belongs to the inner dynein arm light chain family.

Its subcellular location is the cell projection. The protein localises to the cilium. The protein resides in the flagellum. It is found in the dynein axonemal particle. It localises to the cytoplasm. In terms of biological role, involved in sperm flagellum assembly. In Xenopus laevis (African clawed frog), this protein is Axonemal dynein light intermediate polypeptide 1.